The chain runs to 328 residues: Phosphate acyltransferase (328 aa).

This sequence belongs to the PlsX family. In terms of assembly, homodimer. Probably interacts with PlsY.

It localises to the cytoplasm. It carries out the reaction a fatty acyl-[ACP] + phosphate = an acyl phosphate + holo-[ACP]. Its pathway is lipid metabolism; phospholipid metabolism. In terms of biological role, catalyzes the reversible formation of acyl-phosphate (acyl-PO(4)) from acyl-[acyl-carrier-protein] (acyl-ACP). This enzyme utilizes acyl-ACP as fatty acyl donor, but not acyl-CoA. The protein is Phosphate acyltransferase of Campylobacter jejuni subsp. jejuni serotype O:6 (strain 81116 / NCTC 11828).